Here is a 173-residue protein sequence, read N- to C-terminus: MLWFVAVCFAIASVSAMSPADVKKHTVESMKAVPVGRDKAQNGIDFYKFFFTHHKDLRKFFKGAENFGADDVQKSKRFEKQGTALLLAVHVLANVYDNQAVFHGFVRELMNRHEKRGVDPKLWKIFFDDVWVPFLESKGAKLSGDAKAAWKELNKNFNSEAQHQLEKLGLPHA.

A signal peptide spans 1 to 16; sequence MLWFVAVCFAIASVSA. Residues 17 to 166 enclose the Globin domain; the sequence is MSPADVKKHT…FNSEAQHQLE (150 aa). His-113 is a heme b binding site.

The protein belongs to the globin family. In terms of tissue distribution, expressed only by adult nematodes in the gut.

It localises to the secreted. Its subcellular location is the extracellular space. In Nippostrongylus brasiliensis (Rat hookworm), this protein is Globin, cuticular isoform (GLBC).